Consider the following 484-residue polypeptide: Cysteine--tRNA ligase (484 aa).

A Zn(2+)-binding site is contributed by Cys-29. Residues 31 to 41 carry the 'HIGH' region motif; sequence ITVYDYCHLGH. Residues Cys-215, His-240, and Glu-244 each contribute to the Zn(2+) site. The 'KMSKS' region signature appears at 272–276; that stretch reads KMSKS. Lys-275 is a binding site for ATP.

This sequence belongs to the class-I aminoacyl-tRNA synthetase family. Monomer. Requires Zn(2+) as cofactor.

It is found in the cytoplasm. The enzyme catalyses tRNA(Cys) + L-cysteine + ATP = L-cysteinyl-tRNA(Cys) + AMP + diphosphate. This is Cysteine--tRNA ligase from Rippkaea orientalis (strain PCC 8801 / RF-1) (Cyanothece sp. (strain PCC 8801)).